The primary structure comprises 359 residues: MTESNEDLFGIASHFALEGAVTGIEPYGDGHINTTYLVTTDGPRYILQQMNTSIFPDTVNLMRNVELVTSTLKAQGKETLDIVPTTSGATWAEIDGGAWRVYKFIEHTVSYNLVPNPDVFREAGSAFGDFQNFLSEFDASQLTETIAHFHDTPHRFEDFKAALAADKLGRAAACQPEIDFYLSHADQYAVVMDGLRDGSIPLRVTHNDTKLNNILMDATTGKARAIIDLDTIMPGSMLFDFGDSIRFGASTALEDEKDLSKVHFSTELFRAYTEGFVGELRGSITAREAELLPFSGNLLTMECGMRFLADYLEGDIYFATKYPEHNLVRTRTQIKLVQEMEQKASETRAIVADIMEAAR.

A Protein kinase domain is found at Val-21–Arg-359.

It belongs to the protein kinase superfamily. Requires Mg(2+) as cofactor.

The enzyme catalyses N-acetyl-D-hexosamine + ATP = N-acetyl-alpha-D-hexosamine 1-phosphate + ADP + H(+). In terms of biological role, phosphorylates both N-acetylglucosamine (GlcNAc) and N-acetylgalactosamine (GalNAc) at similar rates. Involved in the lacto-N-biose I/galacto-N-biose (LNB/GNB) degradation pathway, which is important for host intestinal colonization by bifidobacteria. Also accepts GTP and ITP as phosphate donors. In vitro, can phosphorylate several GlcNAc and GalNAc derivatives. The protein is N-acetylhexosamine 1-kinase (nahK) of Bifidobacterium longum subsp. longum (strain ATCC 15707 / DSM 20219 / JCM 1217 / NCTC 11818 / E194b).